The sequence spans 517 residues: ATP synthase subunit alpha (517 aa).

175–182 (GDRQTGKT) lines the ATP pocket.

Belongs to the ATPase alpha/beta chains family. As to quaternary structure, F-type ATPases have 2 components, CF(1) - the catalytic core - and CF(0) - the membrane proton channel. CF(1) has five subunits: alpha(3), beta(3), gamma(1), delta(1), epsilon(1). CF(0) has three main subunits: a(1), b(2) and c(9-12). The alpha and beta chains form an alternating ring which encloses part of the gamma chain. CF(1) is attached to CF(0) by a central stalk formed by the gamma and epsilon chains, while a peripheral stalk is formed by the delta and b chains.

The protein resides in the cell membrane. It carries out the reaction ATP + H2O + 4 H(+)(in) = ADP + phosphate + 5 H(+)(out). Its function is as follows. Produces ATP from ADP in the presence of a proton gradient across the membrane. The alpha chain is a regulatory subunit. This chain is ATP synthase subunit alpha, found in Herpetosiphon aurantiacus (strain ATCC 23779 / DSM 785 / 114-95).